We begin with the raw amino-acid sequence, 200 residues long: Recombination protein RecR (200 aa).

The segment at Cys-59–Cys-74 adopts a C4-type zinc-finger fold. The region spanning Ser-82–Pro-177 is the Toprim domain.

Belongs to the RecR family.

Its function is as follows. May play a role in DNA repair. It seems to be involved in an RecBC-independent recombinational process of DNA repair. It may act with RecF and RecO. This is Recombination protein RecR from Bifidobacterium longum subsp. infantis (strain ATCC 15697 / DSM 20088 / JCM 1222 / NCTC 11817 / S12).